Here is a 204-residue protein sequence, read N- to C-terminus: Gellan lyase (204 aa).

As to quaternary structure, multimer.

It is found in the secreted. The enzyme catalyses Eliminative cleavage of beta-D-glucopyranosyl-(1-&gt;4)-beta-D-glucopyranosyluronate bonds of gellan backbone releasing tetrasaccharides containing a 4-deoxy-4,5-unsaturated D-glucopyranosyluronic acid at the non-reducing end. The tetrasaccharide produced from deacetylated gellan is beta-D-4-deoxy-Delta(4)-GlcAp-(1-&gt;4)-beta-D-Glcp-(1-&gt;4)-alpha-L-Rhap-(1-&gt;3)-beta-D-Glcp.. Activity is stimulated by zinc, potassium, lithium, cobalt, sodium, calcium, iron, manganase, magnesium and mercury ions at a concentration of 1 mM, but inhibited by copper ions at a concentration of 1 mM. Activity is inhibited by potassium, sodium and magnesium ions at a concentration of 1 M. Activity is inhibited by urea, EDTA, dithiothreitol, p-CMB, PSF, natrium lauryl sulfate and N-bromosuccinimide. Its function is as follows. Cleaves the glycosidic bonds of gellan backbone and releases tetrasaccharide units of glucuronyl-glucosyl-rhamnosyl-glucose with unsaturated glucuronic acid at the non-reducing terminal. The enzyme is highly specific to the heteropolysaccharide gellan. This is Gellan lyase from Geobacillus stearothermophilus (Bacillus stearothermophilus).